The sequence spans 277 residues: Caspase-3 (277 aa).

Met-1 carries the post-translational modification N-acetylmethionine. 2 consecutive propeptides follow at residues 1 to 9 and 10 to 28; these read MDNNETSVD and SKSI…KSMD. At Lys-11 the chain carries N6-acetyllysine. The residue at position 26 (Ser-26) is a Phosphoserine. Residues His-121 and Cys-163 contribute to the active site. Position 163 is an S-nitrosocysteine; in inhibited form (Cys-163).

This sequence belongs to the peptidase C14A family. In terms of assembly, heterotetramer that consists of two anti-parallel arranged heterodimers, each one formed by a 17 kDa (p17) and a 12 kDa (p12) subunit. Interacts with BIRC6/bruce. In terms of processing, cleavage by granzyme B, caspase-6, caspase-8 and caspase-10 generates the two active subunits. Additional processing of the propeptides is likely due to the autocatalytic activity of the activated protease. Active heterodimers between the small subunit of caspase-7 protease and the large subunit of caspase-3 also occur and vice versa. Post-translationally, S-nitrosylated on its catalytic site cysteine in unstimulated cell lines and denitrosylated upon activation of the Fas apoptotic pathway, associated with an increase in intracellular caspase activity. Fas therefore activates caspase-3 not only by inducing the cleavage of the caspase zymogen to its active subunits, but also by stimulating the denitrosylation of its active site thiol. Ubiquitinated by BIRC6; this activity is inhibited by DIABLO/SMAC. In terms of tissue distribution, expressed in heart, brain, liver, and muscle but not in kidney or testis.

The protein localises to the cytoplasm. The enzyme catalyses Strict requirement for an Asp residue at positions P1 and P4. It has a preferred cleavage sequence of Asp-Xaa-Xaa-Asp-|- with a hydrophobic amino-acid residue at P2 and a hydrophilic amino-acid residue at P3, although Val or Ala are also accepted at this position.. Its activity is regulated as follows. Inhibited by BIRC6; following inhibition of BIRC6-caspase binding by DIABLO/SMAC, BIRC6 is subjected to caspase cleavage, leading to an increase in active caspases. Its function is as follows. Involved in the activation cascade of caspases responsible for apoptosis execution. At the onset of apoptosis, it proteolytically cleaves poly(ADP-ribose) polymerase PARP1 at a '216-Asp-|-Gly-217' bond. Cleaves and activates sterol regulatory element binding proteins (SREBPs) between the basic helix-loop-helix leucine zipper domain and the membrane attachment domain. Cleaves and activates caspase-6, -7 and -9 (CASP6, CASP7 and CASP9, respectively). Cleaves and inactivates interleukin-18 (IL18). Triggers cell adhesion in sympathetic neurons through RET cleavage. Cleaves IL-1 beta between an Asp and an Ala, releasing the mature cytokine which is involved in a variety of inflammatory processes. Cleaves and inhibits serine/threonine-protein kinase AKT1 in response to oxidative stress. Acts as an inhibitor of type I interferon production during virus-induced apoptosis by mediating cleavage of antiviral proteins CGAS, IRF3 and MAVS, thereby preventing cytokine overproduction. Also involved in pyroptosis by mediating cleavage and activation of gasdermin-E (GSDME). Cleaves XRCC4 and phospholipid scramblase proteins XKR4, XKR8 and XKR9, leading to promote phosphatidylserine exposure on apoptotic cell surface. Cleaves BIRC6 following inhibition of BIRC6-caspase binding by DIABLO/SMAC. This Rattus norvegicus (Rat) protein is Caspase-3 (Casp3).